Reading from the N-terminus, the 98-residue chain is Integration host factor subunit alpha (98 aa).

The segment at 49–71 (FGNFDLRDKNQRPGRNPKTGEDI) is disordered.

The protein belongs to the bacterial histone-like protein family. In terms of assembly, heterodimer of an alpha and a beta chain.

This protein is one of the two subunits of integration host factor, a specific DNA-binding protein that functions in genetic recombination as well as in transcriptional and translational control. This is Integration host factor subunit alpha from Shewanella sp. (strain MR-4).